The chain runs to 638 residues: Nucleolar protein 4 (638 aa).

4 disordered regions span residues 210–312 (QQDE…SPLS), 343–403 (EREA…TDGV), 503–535 (NAAKRMRLERQQDESAPADKQCKPEATQATYST), and 573–603 (SSGPTDLSMKRQLATSSGSSSSSNSRPQLSP). A compositionally biased stretch (acidic residues) spans 211–225 (QDEDESSIESDEFDM). Composition is skewed to polar residues over residues 229–254 (TRMSAVNSDLSSNLEERMQSPQNLHG), 263–281 (ESFNGNETLGHSSIASGGT), 302–312 (QPLNLSDSPLS), and 351–363 (SKSPAHSYSSYDS). 3 stretches are compositionally biased toward basic and acidic residues: residues 364 to 374 (GKNESVDRGAE), 391 to 403 (HDDSEKVNETDGV), and 503 to 515 (NAAKRMRLERQQD). A compositionally biased stretch (low complexity) spans 588–597 (SSGSSSSSNS).

As to expression, expressed predominantly in fetal brain, adult brain and testis.

The protein localises to the nucleus. Its subcellular location is the nucleolus. This is Nucleolar protein 4 (NOL4) from Homo sapiens (Human).